Here is a 451-residue protein sequence, read N- to C-terminus: Vacuolar cation/proton exchanger 1a (451 aa).

Residues 1–58 (MEAAAAMEAGRKLAARHPHGRSRTAHNMSSSSLRKKSDAALVRKVPVAPLRPLLANLQ) lie on the Cytoplasmic side of the membrane. The disordered stretch occupies residues 9-37 (AGRKLAARHPHGRSRTAHNMSSSSLRKKS). Residues 13 to 24 (LAARHPHGRSRT) are compositionally biased toward basic residues. The chain crosses the membrane as a helical span at residues 59–79 (EVFLATKLAVLFPAVPLAIAA). Residues 80–86 (QCFRFDQ) lie on the Vacuolar side of the membrane. A helical transmembrane segment spans residues 87–107 (VWVFALSLLGLIPLAERVSFL). The Cytoplasmic portion of the chain corresponds to 108–120 (TEQIALYTGPTVG). The chain crosses the membrane as a helical span at residues 121–141 (GLLNATCGNATELIIALFALL). Residues 128-163 (GNATELIIALFALLKGKIEVVKCSLLGSVLSNLLLV) form a cation selection region. Residues 142–153 (KGKIEVVKCSLL) are Vacuolar-facing. The helical transmembrane segment at 154 to 174 (GSVLSNLLLVLGTSLFCGGVV) threads the bilayer. The Cytoplasmic segment spans residues 175–191 (NLGARQPYDRNQSDVST). Residues 192-212 (ALLFLAVLCHSAPLLLRYAVA) form a helical membrane-spanning segment. Residues 213-228 (AGEHSVSATSAAASLD) are Vacuolar-facing. Residues 229–249 (LSRACSFVMLASYVAYLFFQL) traverse the membrane as a helical segment. Topologically, residues 250-273 (KTHRQLFEPQEVDGGDAGDDDEEP) are cytoplasmic. Residues 274 to 294 (ALGFASALFWLALMTAVISVL) form a helical membrane-spanning segment. Residues 295 to 317 (SEYVVGTIEPTSQSWGLSVSFIS) lie on the Vacuolar side of the membrane. The chain crosses the membrane as a helical span at residues 318 to 338 (IILLPIVGNAAEHAGAIIFAL). Positions 325-360 (GNAAEHAGAIIFALKNKLDITLGVALGSATQISMFV) are cation selection. Topologically, residues 339–352 (KNKLDITLGVALGS) are cytoplasmic. Residues 353-373 (ATQISMFVVPLSVLVAWIMGV) traverse the membrane as a helical segment. Residues 374-378 (QMDLD) lie on the Vacuolar side of the membrane. The helical transmembrane segment at 379–399 (FKLLETGSLFMAVLVTAFTLQ) threads the bilayer. Over 400 to 404 (DGTSH) the chain is Cytoplasmic. Residues 405–425 (YLKGILLLLCYIVIGACFFVA) form a helical membrane-spanning segment. Residues 426–451 (RQPAGHANSNGALLDVPTGSMSVQAA) lie on the Vacuolar side of the membrane.

Belongs to the Ca(2+):cation antiporter (CaCA) (TC 2.A.19) family. Cation/proton exchanger (CAX) subfamily. Ubiquitous.

Its subcellular location is the vacuole membrane. Vacuolar cation/proton exchanger (CAX). Translocates Ca(2+) and other metal ions into vacuoles using the proton gradient formed by H(+)-ATPase and H(+)-pyrophosphatase. The chain is Vacuolar cation/proton exchanger 1a (CAX1a) from Oryza sativa subsp. japonica (Rice).